A 412-amino-acid chain; its full sequence is Autophagy-related protein 34 (412 aa).

The segment at 246–348 is AMS1-binding; that stretch reads NDPLLHVEVS…SNEITLKSPL (103 aa).

Interacts with AMS1, ATG8 and ATG11.

It is found in the preautophagosomal structure membrane. Cargo-receptor protein involved in the cytoplasm to vacuole transport (Cvt) and in autophagy. Recognizes cargo proteins, such as AMS1 and delivers them to the pre-autophagosomal structure for eventual engulfment by the autophagosome and targeting to the vacuole. In Saccharomyces cerevisiae (strain ATCC 204508 / S288c) (Baker's yeast), this protein is Autophagy-related protein 34 (ATG34).